The chain runs to 200 residues: Superoxide dismutase [Fe] (200 aa).

Fe cation is bound by residues H28, H82, D165, and H169.

It belongs to the iron/manganese superoxide dismutase family. As to quaternary structure, homodimer. Requires Fe cation as cofactor.

It carries out the reaction 2 superoxide + 2 H(+) = H2O2 + O2. Its function is as follows. Destroys superoxide anion radicals which are normally produced within the cells and which are toxic to biological systems. This chain is Superoxide dismutase [Fe] (sodB), found in Rhodobacter capsulatus (Rhodopseudomonas capsulata).